The following is a 248-amino-acid chain: Metallo-beta-lactamase type 2 (248 aa).

The first 21 residues, 1–21 (MKGLKGLLVLALGFTGLQVFG), serve as a signal peptide directing secretion. The Zn(2+) site is built by His-97, His-99, Asp-101, His-160, and Cys-179. Residue Lys-182 coordinates substrate. Residue His-221 participates in Zn(2+) binding.

Belongs to the metallo-beta-lactamase superfamily. Class-B beta-lactamase family. In terms of assembly, monomer. Requires Zn(2+) as cofactor.

It localises to the periplasm. The catalysed reaction is a beta-lactam + H2O = a substituted beta-amino acid. Its function is as follows. Confers resistance to the different beta-lactams antibiotics (penicillin, cephalosporin and carbapenem) via the hydrolysis of the beta-lactam ring. The sequence is that of Metallo-beta-lactamase type 2 (blaB7) from Elizabethkingia meningoseptica (Chryseobacterium meningosepticum).